The sequence spans 284 residues: 4-hydroxybenzoate octaprenyltransferase (284 aa).

Helical transmembrane passes span 19 to 39 (IGSL…AQGL), 42 to 62 (LRVL…GCVI), 93 to 113 (LLLF…MNTL), 114 to 134 (TIQL…MKRF), 136 to 156 (HLPQ…AWAA), 158 to 178 (ANTL…WTIA), 210 to 230 (IIGL…QGLA), 233 to 253 (TSYY…QHLI), and 264 to 284 (AFLN…LSVW).

This sequence belongs to the UbiA prenyltransferase family. Mg(2+) serves as cofactor.

The protein resides in the cell inner membrane. It carries out the reaction all-trans-octaprenyl diphosphate + 4-hydroxybenzoate = 4-hydroxy-3-(all-trans-octaprenyl)benzoate + diphosphate. The protein operates within cofactor biosynthesis; ubiquinone biosynthesis. Functionally, catalyzes the prenylation of para-hydroxybenzoate (PHB) with an all-trans polyprenyl group. Mediates the second step in the final reaction sequence of ubiquinone-8 (UQ-8) biosynthesis, which is the condensation of the polyisoprenoid side chain with PHB, generating the first membrane-bound Q intermediate 3-octaprenyl-4-hydroxybenzoate. The sequence is that of 4-hydroxybenzoate octaprenyltransferase from Vibrio cholerae serotype O1 (strain ATCC 39541 / Classical Ogawa 395 / O395).